A 194-amino-acid chain; its full sequence is Xanthine phosphoribosyltransferase (194 aa).

Positions 20 and 27 each coordinate xanthine. 128–132 (ANGEA) contacts 5-phospho-alpha-D-ribose 1-diphosphate. Lysine 156 contributes to the xanthine binding site.

Belongs to the purine/pyrimidine phosphoribosyltransferase family. Xpt subfamily. As to quaternary structure, homodimer.

It localises to the cytoplasm. It catalyses the reaction XMP + diphosphate = xanthine + 5-phospho-alpha-D-ribose 1-diphosphate. The protein operates within purine metabolism; XMP biosynthesis via salvage pathway; XMP from xanthine: step 1/1. In terms of biological role, converts the preformed base xanthine, a product of nucleic acid breakdown, to xanthosine 5'-monophosphate (XMP), so it can be reused for RNA or DNA synthesis. This chain is Xanthine phosphoribosyltransferase, found in Macrococcus caseolyticus (strain JCSC5402) (Macrococcoides caseolyticum).